Reading from the N-terminus, the 167-residue chain is Leptin (167 aa).

Positions 1 to 21 are cleaved as a signal peptide; the sequence is MRCGSLCRFLWLWSCLSYIEA. Cysteine 117 and cysteine 167 are oxidised to a cystine.

Belongs to the leptin family.

It is found in the secreted. Functionally, key player in the regulation of energy balance and body weight control. Once released into the circulation, has central and peripheral effects by binding LEPR, found in many tissues, which results in the activation of several major signaling pathways. In the hypothalamus, acts as an appetite-regulating factor that induces a decrease in food intake and an increase in energy consumption by inducing anorexinogenic factors and suppressing orexigenic neuropeptides, also regulates bone mass and secretion of hypothalamo-pituitary-adrenal hormones. In the periphery, increases basal metabolism, influences reproductive function, regulates pancreatic beta-cell function and insulin secretion, is pro-angiogenic for endothelial cell and affects innate and adaptive immunity. In the arcuate nucleus of the hypothalamus, activates by depolarization POMC neurons inducing FOS and SOCS3 expression to release anorexigenic peptides and inhibits by hyperpolarization NPY neurons inducing SOCS3 with a consequent reduction on release of orexigenic peptides. In addition to its known satiety inducing effect, has a modulatory role in nutrient absorption. In the intestine, reduces glucose absorption by enterocytes by activating PKC and leading to a sequential activation of p38, PI3K and ERK signaling pathways which exerts an inhibitory effect on glucose absorption. Acts as a growth factor on certain tissues, through the activation of different signaling pathways increases expression of genes involved in cell cycle regulation such as CCND1, via JAK2-STAT3 pathway, or VEGFA, via MAPK1/3 and PI3K-AKT1 pathways. May also play an apoptotic role via JAK2-STAT3 pathway and up-regulation of BIRC5 expression. Pro-angiogenic, has mitogenic activity on vascular endothelial cells and plays a role in matrix remodeling by regulating the expression of matrix metalloproteinases (MMPs) and tissue inhibitors of metalloproteinases (TIMPs). In innate immunity, modulates the activity and function of neutrophils by increasing chemotaxis and the secretion of oxygen radicals. Increases phagocytosis by macrophages and enhances secretion of pro-inflammatory mediators. Increases cytotoxic ability of NK cells. Plays a pro-inflammatory role, in synergy with IL1B, by inducing NOS2 which promotes the production of IL6, IL8 and Prostaglandin E2, through a signaling pathway that involves JAK2, PI3K, MAP2K1/MEK1 and MAPK14/p38. In adaptive immunity, promotes the switch of memory T-cells towards T helper-1 cell immune responses. Increases CD4(+)CD25(-) T-cell proliferation and reduces autophagy during TCR (T-cell receptor) stimulation, through MTOR signaling pathway activation and BCL2 up-regulation. The sequence is that of Leptin (LEP) from Phoca vitulina (Harbor seal).